The sequence spans 182 residues: Bifunctional protein PyrR (182 aa).

The short motif at 97-109 is the PRPP-binding element; the sequence is VVLVDDVIFRGRT.

Belongs to the purine/pyrimidine phosphoribosyltransferase family. PyrR subfamily.

It carries out the reaction UMP + diphosphate = 5-phospho-alpha-D-ribose 1-diphosphate + uracil. Regulates the transcription of the pyrimidine nucleotide (pyr) operon in response to exogenous pyrimidines. Functionally, also displays a weak uracil phosphoribosyltransferase activity which is not physiologically significant. This Synechococcus sp. (strain JA-2-3B'a(2-13)) (Cyanobacteria bacterium Yellowstone B-Prime) protein is Bifunctional protein PyrR.